Consider the following 152-residue polypeptide: MNNILVINGPNLNLLGKREPDIYGNITLENINQKIKLHFKNEDLKIDFFQSNEEGKIIDKIIESEKKYNAIVINPAAYSHYSIAILDAMRSINIPVVEVHLSNIYKREEYRKKSVTAEASLGVISGFGYYGYIMAIEFILNNLVRENNIVVH.

The active-site Proton acceptor is the tyrosine 23. 3 residues coordinate substrate: asparagine 74, histidine 80, and aspartate 87. Histidine 100 (proton donor) is an active-site residue. Residues 101-102 (LS) and arginine 111 each bind substrate.

Belongs to the type-II 3-dehydroquinase family. As to quaternary structure, homododecamer.

It catalyses the reaction 3-dehydroquinate = 3-dehydroshikimate + H2O. It functions in the pathway metabolic intermediate biosynthesis; chorismate biosynthesis; chorismate from D-erythrose 4-phosphate and phosphoenolpyruvate: step 3/7. In terms of biological role, catalyzes a trans-dehydration via an enolate intermediate. This chain is 3-dehydroquinate dehydratase, found in Clostridium botulinum (strain Langeland / NCTC 10281 / Type F).